The following is a 121-amino-acid chain: D-ornithine 4,5-aminomutase subunit alpha (121 aa).

As to quaternary structure, heterotetramer of 2 alpha (OraS) and 2 beta (OraE) subunits.

The catalysed reaction is D-ornithine = (2R,4S)-2,4-diaminopentanoate. Increased activity in the presence of dithiothreitol (DTT) in vitro. Inhibited by 1 mM potassium phosphate and potassium chloride. Inhibited by L-alpha-ornithine, D,L-alpha-lysine, L-beta-lysine (50%-60%), L-alpha-lysine (26%) and by delta-amino-n-valeric acid to a lesser extent. Significant decrease in activity is observed in the presence of 0.2 mM p-chloromercuribenzoate, N-ethylmaleimide and also by 2 mM iodoacetate to a lesser extent but not inhibited by arsenite. Component of a complex that catalyzes the reversible migration of the omega amino group of D-ornithine to C-4 to form (2R,4S)-2,4-diaminopentanoic acid. The role of OraS remains obscure; however, it seems to be required for a correct folding of the OraE subunit. The complex is active only on D-ornithine and 2,4-diaminopentanoic acid and not active on L-ornithine, L-beta-lysine, L-alpha-lysine or D-alpha-lysine. This chain is D-ornithine 4,5-aminomutase subunit alpha (oraS), found in Acetoanaerobium sticklandii (strain ATCC 12662 / DSM 519 / JCM 1433 / CCUG 9281 / NCIMB 10654 / HF) (Clostridium sticklandii).